A 150-amino-acid chain; its full sequence is uncharacterized protein (150 aa).

The N-terminal stretch at 1–22 (MVIALKRFSFLASIATLTVLNA) is a signal peptide. Cysteine 23 is lipidated: N-palmitoyl cysteine. Cysteine 23 carries the S-diacylglycerol cysteine lipid modification.

It belongs to the MG067/MG068/MG395 family.

The protein localises to the cell membrane. This is an uncharacterized protein from Mycoplasma pneumoniae (strain ATCC 29342 / M129 / Subtype 1) (Mycoplasmoides pneumoniae).